A 299-amino-acid polypeptide reads, in one-letter code: tRNA-cytidine(32) 2-sulfurtransferase (299 aa).

The PP-loop motif signature appears at 56–61 (SGGKDS). Residues C131, C134, and C222 each coordinate [4Fe-4S] cluster.

This sequence belongs to the TtcA family. In terms of assembly, homodimer. Mg(2+) serves as cofactor. [4Fe-4S] cluster is required as a cofactor.

Its subcellular location is the cytoplasm. It catalyses the reaction cytidine(32) in tRNA + S-sulfanyl-L-cysteinyl-[cysteine desulfurase] + AH2 + ATP = 2-thiocytidine(32) in tRNA + L-cysteinyl-[cysteine desulfurase] + A + AMP + diphosphate + H(+). It functions in the pathway tRNA modification. Its function is as follows. Catalyzes the ATP-dependent 2-thiolation of cytidine in position 32 of tRNA, to form 2-thiocytidine (s(2)C32). The sulfur atoms are provided by the cysteine/cysteine desulfurase (IscS) system. This chain is tRNA-cytidine(32) 2-sulfurtransferase, found in Xylella fastidiosa (strain 9a5c).